Here is a 288-residue protein sequence, read N- to C-terminus: Ribosomal RNA small subunit methyltransferase A (288 aa).

S-adenosyl-L-methionine contacts are provided by Asn-28, Leu-30, Gly-55, Glu-77, Asp-103, and Asn-123.

It belongs to the class I-like SAM-binding methyltransferase superfamily. rRNA adenine N(6)-methyltransferase family. RsmA subfamily.

The protein resides in the cytoplasm. The enzyme catalyses adenosine(1518)/adenosine(1519) in 16S rRNA + 4 S-adenosyl-L-methionine = N(6)-dimethyladenosine(1518)/N(6)-dimethyladenosine(1519) in 16S rRNA + 4 S-adenosyl-L-homocysteine + 4 H(+). Its function is as follows. Specifically dimethylates two adjacent adenosines (A1518 and A1519) in the loop of a conserved hairpin near the 3'-end of 16S rRNA in the 30S particle. May play a critical role in biogenesis of 30S subunits. This is Ribosomal RNA small subunit methyltransferase A from Xanthobacter autotrophicus (strain ATCC BAA-1158 / Py2).